The sequence spans 422 residues: Serine--tRNA ligase (422 aa).

Residue 229–231 (TAE) coordinates L-serine. 260 to 262 (RAE) is a binding site for ATP. Residue glutamate 283 participates in L-serine binding. 347–350 (EISS) contributes to the ATP binding site. Serine 383 contributes to the L-serine binding site.

This sequence belongs to the class-II aminoacyl-tRNA synthetase family. Type-1 seryl-tRNA synthetase subfamily. Homodimer. The tRNA molecule binds across the dimer.

It localises to the cytoplasm. It catalyses the reaction tRNA(Ser) + L-serine + ATP = L-seryl-tRNA(Ser) + AMP + diphosphate + H(+). It carries out the reaction tRNA(Sec) + L-serine + ATP = L-seryl-tRNA(Sec) + AMP + diphosphate + H(+). It functions in the pathway aminoacyl-tRNA biosynthesis; selenocysteinyl-tRNA(Sec) biosynthesis; L-seryl-tRNA(Sec) from L-serine and tRNA(Sec): step 1/1. Functionally, catalyzes the attachment of serine to tRNA(Ser). Is also able to aminoacylate tRNA(Sec) with serine, to form the misacylated tRNA L-seryl-tRNA(Sec), which will be further converted into selenocysteinyl-tRNA(Sec). In Heliobacterium modesticaldum (strain ATCC 51547 / Ice1), this protein is Serine--tRNA ligase.